Here is a 220-residue protein sequence, read N- to C-terminus: Probable septum site-determining protein MinC (220 aa).

The protein belongs to the MinC family. As to quaternary structure, interacts with MinD and FtsZ.

Functionally, cell division inhibitor that blocks the formation of polar Z ring septums. Rapidly oscillates between the poles of the cell to destabilize FtsZ filaments that have formed before they mature into polar Z rings. Prevents FtsZ polymerization. The polypeptide is Probable septum site-determining protein MinC (Vibrio vulnificus (strain CMCP6)).